Consider the following 152-residue polypeptide: Transcriptional repressor NrdR (152 aa).

The segment at 3–34 (CPFCSTEETKVIDSRLVSEGYQVRRRRECTNC) is a zinc-finger region. One can recognise an ATP-cone domain in the interval 49 to 139 (PKIVKTDGYR…VYLSFENINE (91 aa)).

Belongs to the NrdR family. Zn(2+) is required as a cofactor.

Negatively regulates transcription of bacterial ribonucleotide reductase nrd genes and operons by binding to NrdR-boxes. The polypeptide is Transcriptional repressor NrdR (Actinobacillus succinogenes (strain ATCC 55618 / DSM 22257 / CCUG 43843 / 130Z)).